Reading from the N-terminus, the 240-residue chain is SURF1-like protein (240 aa).

Helical transmembrane passes span 7–23 (VFITFTILISLGFWQLS) and 201–219 (YALTWFGLAISLIVIYVIY).

It belongs to the SURF1 family.

Its subcellular location is the cell membrane. The polypeptide is SURF1-like protein (Rickettsia conorii (strain ATCC VR-613 / Malish 7)).